Here is a 520-residue protein sequence, read N- to C-terminus: Maturase K (520 aa).

The protein belongs to the intron maturase 2 family. MatK subfamily.

Its subcellular location is the plastid. It localises to the chloroplast. Usually encoded in the trnK tRNA gene intron. Probably assists in splicing its own and other chloroplast group II introns. The protein is Maturase K of Maianthemum dilatatum (False lily-of-the-valley).